A 2539-amino-acid polypeptide reads, in one-letter code: Zinc finger FYVE domain-containing protein 26 (2539 aa).

A phosphoserine mark is found at serine 297, serine 615, serine 619, and serine 703. 3 disordered regions span residues 594-637, 699-724, and 738-806; these read HLPE…SLGV, ISSR…GLQS, and WRHK…SLSA. Positions 764 to 774 are enriched in basic residues; sequence PSLRRGRRTRR. Low complexity predominate over residues 787–805; it reads SLESTSSELSTSTSEGSLS. Serine 800 carries the post-translational modification Phosphoserine. Positions 868 to 895 form a coiled coil; the sequence is MFMERYQEVIQELAQVEHKIENQNSDAG. Positions 1267-1296 are disordered; it reads DLPLSTPSSPRTTENPTLERKPYSSPRDSS. A compositionally biased stretch (polar residues) spans 1271–1282; it reads STPSSPRTTENP. 4 positions are modified to phosphoserine: serine 1742, serine 1764, serine 1780, and serine 1782. A disordered region spans residues 1754 to 1808; that stretch reads ADPETLPRSPSAEFSPAAPPGISSIHSPSLRERSFPPTQPSQEFVPPATPPARHQ. A compositionally biased stretch (low complexity) spans 1760-1769; it reads PRSPSAEFSP. Residues 1812–1872 form an FYVE-type zinc finger; that stretch reads DETESICMVC…VCDQCYSYCN (61 aa). Zn(2+) contacts are provided by cysteine 1818, cysteine 1821, cysteine 1835, cysteine 1838, cysteine 1843, cysteine 1846, cysteine 1864, and cysteine 1867.

In terms of assembly, interacts with AP5Z1, AP5B1, AP5S1 and SPG11. Interacts with TTC19 and KIF13A. As to expression, strongest expression in the adrenal gland, bone marrow, adult brain, fetal brain, lung, placenta, prostate, skeletal muscle, testis, thymus, and retina. Intermediate levels are detected in other structures, including the spinal cord.

The protein resides in the cytoplasm. Its subcellular location is the cytoskeleton. It localises to the microtubule organizing center. It is found in the centrosome. The protein localises to the midbody. In terms of biological role, phosphatidylinositol 3-phosphate-binding protein required for the abscission step in cytokinesis: recruited to the midbody during cytokinesis and acts as a regulator of abscission. May also be required for efficient homologous recombination DNA double-strand break repair. This is Zinc finger FYVE domain-containing protein 26 (ZFYVE26) from Homo sapiens (Human).